The primary structure comprises 384 residues: Multidrug/solvent efflux pump periplasmic linker protein MepA (384 aa).

The N-terminal stretch at 1 to 22 (MQFKPAVTALVSAVALATLLSG) is a signal peptide. Cysteine 23 is lipidated: N-palmitoyl cysteine. Cysteine 23 is lipidated: S-diacylglycerol cysteine. Positions 115–155 (LAERYKQLIDEQAVSKQEYDDANAKRLQAEASLKSAQIDLR) form a coiled coil. The tract at residues 362 to 384 (ATNVKKPAGPDQANAAKADAKAE) is disordered. Low complexity predominate over residues 368–378 (PAGPDQANAAK).

The protein belongs to the membrane fusion protein (MFP) (TC 8.A.1) family.

It is found in the cell inner membrane. Functionally, the periplasmic linker protein component of an organic solvent and antibiotic efflux pump; confers resistance to toluene, hexane, p-xylene, ampicillin, penicillin G, erythromycin, novobiocin and tetracycline. The chain is Multidrug/solvent efflux pump periplasmic linker protein MepA (mepA) from Pseudomonas putida (Arthrobacter siderocapsulatus).